The following is a 381-amino-acid chain: Alpha-methylacyl-CoA racemase (381 aa).

Substrate contacts are provided by residues Arg-36 and 54-57 (LDLK). N6-acetyllysine is present on Lys-57. An N6-acetyllysine; alternate mark is found at Lys-86 and Lys-100. N6-succinyllysine; alternate occurs at positions 86 and 100. The residue at position 117 (Lys-117) is an N6-acetyllysine. Substrate is bound at residue 120-125 (GHDINY). The Proton acceptor role is filled by His-121. Residue Asp-151 is the Proton donor of the active site. The residue at position 267 (Lys-267) is an N6-succinyllysine. Residues 316–344 (TDGEQLPSPRPAPLLSRTPAVPSAKRDPS) are disordered. A Microbody targeting signal motif is present at residues 379-381 (ANL).

It belongs to the CoA-transferase III family. As to quaternary structure, monomer.

The protein localises to the peroxisome. It localises to the mitochondrion. It carries out the reaction a (2S)-2-methylacyl-CoA = a (2R)-2-methylacyl-CoA. The enzyme catalyses (25R)-3alpha,7alpha,12alpha-trihydroxy-5beta-cholestan-26-oyl-CoA = (25S)-3alpha,7alpha,12alpha-trihydroxy-5beta-cholestan-26-oyl-CoA. It catalyses the reaction (2R,6)-dimethylheptanoyl-CoA = (2S,6)-dimethylheptanoyl-CoA. Its pathway is lipid metabolism; bile acid biosynthesis. It participates in lipid metabolism; fatty acid metabolism. Functionally, catalyzes the interconversion of (R)- and (S)-stereoisomers of alpha-methyl-branched-chain fatty acyl-CoA esters. Acts only on coenzyme A thioesters, not on free fatty acids, and accepts as substrates a wide range of alpha-methylacyl-CoAs, including pristanoyl-CoA, trihydroxycoprostanoyl-CoA (an intermediate in bile acid synthesis), and arylpropionic acids like the anti-inflammatory drug ibuprofen (2-(4-isobutylphenyl)propionic acid) but neither 3-methyl-branched nor linear-chain acyl-CoAs. In Mus musculus (Mouse), this protein is Alpha-methylacyl-CoA racemase (Amacr).